Here is a 297-residue protein sequence, read N- to C-terminus: Acetyl-coenzyme A carboxylase carboxyl transferase subunit beta (297 aa).

The CoA carboxyltransferase N-terminal domain occupies 27 to 296 (LWHKCPSCEA…PVETSQVTAK (270 aa)). Residues Cys31, Cys34, Cys50, and Cys53 each coordinate Zn(2+). The C4-type zinc-finger motif lies at 31–53 (CPSCEAVLYRPELEKTLDVCPKC).

This sequence belongs to the AccD/PCCB family. In terms of assembly, acetyl-CoA carboxylase is a heterohexamer composed of biotin carboxyl carrier protein (AccB), biotin carboxylase (AccC) and two subunits each of ACCase subunit alpha (AccA) and ACCase subunit beta (AccD). Zn(2+) serves as cofactor.

It is found in the cytoplasm. It catalyses the reaction N(6)-carboxybiotinyl-L-lysyl-[protein] + acetyl-CoA = N(6)-biotinyl-L-lysyl-[protein] + malonyl-CoA. It participates in lipid metabolism; malonyl-CoA biosynthesis; malonyl-CoA from acetyl-CoA: step 1/1. Component of the acetyl coenzyme A carboxylase (ACC) complex. Biotin carboxylase (BC) catalyzes the carboxylation of biotin on its carrier protein (BCCP) and then the CO(2) group is transferred by the transcarboxylase to acetyl-CoA to form malonyl-CoA. The protein is Acetyl-coenzyme A carboxylase carboxyl transferase subunit beta of Stutzerimonas stutzeri (strain A1501) (Pseudomonas stutzeri).